A 94-amino-acid polypeptide reads, in one-letter code: Pyrimidine/purine nucleoside phosphorylase (94 aa).

This sequence belongs to the nucleoside phosphorylase PpnP family.

The catalysed reaction is a purine D-ribonucleoside + phosphate = a purine nucleobase + alpha-D-ribose 1-phosphate. It catalyses the reaction adenosine + phosphate = alpha-D-ribose 1-phosphate + adenine. The enzyme catalyses cytidine + phosphate = cytosine + alpha-D-ribose 1-phosphate. It carries out the reaction guanosine + phosphate = alpha-D-ribose 1-phosphate + guanine. The catalysed reaction is inosine + phosphate = alpha-D-ribose 1-phosphate + hypoxanthine. It catalyses the reaction thymidine + phosphate = 2-deoxy-alpha-D-ribose 1-phosphate + thymine. The enzyme catalyses uridine + phosphate = alpha-D-ribose 1-phosphate + uracil. It carries out the reaction xanthosine + phosphate = alpha-D-ribose 1-phosphate + xanthine. Catalyzes the phosphorolysis of diverse nucleosides, yielding D-ribose 1-phosphate and the respective free bases. Can use uridine, adenosine, guanosine, cytidine, thymidine, inosine and xanthosine as substrates. Also catalyzes the reverse reactions. The protein is Pyrimidine/purine nucleoside phosphorylase of Escherichia fergusonii (strain ATCC 35469 / DSM 13698 / CCUG 18766 / IAM 14443 / JCM 21226 / LMG 7866 / NBRC 102419 / NCTC 12128 / CDC 0568-73).